The chain runs to 173 residues: Alpha-crystallin A chain (173 aa).

Position 1 is an N-acetylmethionine (methionine 1). Residues 1-63 (MDIAIQHPWF…RTVLDSGVSE (63 aa)) form a required for complex formation with BFSP1 and BFSP2 region. Glutamine 6 is subject to Deamidated glutamine; partial. Serine 45 bears the Phosphoserine mark. Glutamine 50 is subject to Deamidated glutamine; partial. Positions 52–162 (LFRTVLDSGV…GHSERAIPVS (111 aa)) constitute a sHSP domain. Lysine 70 bears the N6-acetyllysine mark. Histidine 79 lines the Zn(2+) pocket. Position 90 is a deamidated glutamine; partial (glutamine 90). Lysine 99 is subject to N6-acetyllysine. Histidine 100 contributes to the Zn(2+) binding site. Position 101 is a deamidated asparagine; partial (asparagine 101). Glutamate 102 and histidine 107 together coordinate Zn(2+). Serine 122 is subject to Phosphoserine. Asparagine 123 bears the Deamidated asparagine; partial mark. Residues 144–173 (PKVPSGVDAGHSERAIPVSREEKPSSAPTS) form a disordered region. The span at 153–167 (GHSERAIPVSREEKP) shows a compositional bias: basic and acidic residues. Position 154 (histidine 154) interacts with Zn(2+). Serine 162 carries O-linked (GlcNAc) serine glycosylation.

Belongs to the small heat shock protein (HSP20) family. Heteromer composed of three CRYAA and one CRYAB subunits. Inter-subunit bridging via zinc ions enhances stability, which is crucial as there is no protein turn over in the lens. Can also form homodimers and homotetramers (dimers of dimers) which serve as the building blocks of homooligomers. Within homooligomers, the zinc-binding motif is created from residues of 3 different molecules. His-100 and Glu-102 from one molecule are ligands of the zinc ion, and His-107 and His-154 residues from additional molecules complete the site with tetrahedral coordination geometry. Part of a complex required for lens intermediate filament formation composed of BFSP1, BFSP2 and CRYAA. Post-translationally, acetylation at Lys-70 may increase chaperone activity. Undergoes age-dependent proteolytical cleavage at the C-terminus.

The protein resides in the cytoplasm. Its subcellular location is the nucleus. Its function is as follows. Contributes to the transparency and refractive index of the lens. Acts as a chaperone, preventing aggregation of various proteins under a wide range of stress conditions. Required for the correct formation of lens intermediate filaments as part of a complex composed of BFSP1, BFSP2 and CRYAA. In Sus scrofa (Pig), this protein is Alpha-crystallin A chain (CRYAA).